The primary structure comprises 597 residues: MSTMFLRTLREDPADADVDSAKLLQRAGYIRKAAPGIWTWLPLGLRVLNKIEAIIREEINGIGAQEVHFPALLPREPYEATHRWEEYGDNIFRLKDRHEADYLLAPTHEEMFTLLVKDMYSSYKDLPVTLYQIQTKYRDEFRPRAGLIRGREFVMKDAYSFTIDEEGMRKAYYDERGAYERIFQRLDLKYVPVFAMSGPMGGSASEEFLAPMPIGEDTFALAPSGKAWNVEALSTPELPEIDASTTPAASKEATPDAKTIDNMIERANADHPRTDGREWQASDILKNVVITVKHPEDEEHDEPWREVIVVGVPGDRTVDMKRLEAQFAPAELEEATEEDLKQHPELVPGYIGPMVLGPQAEAAGVKNPVRYLIDAHVVKGSAWFTGADENEVDYYNLVYGRDFKVDGVVEAVEVRHGDMSPDGSGPLSFERGVEIGQVFQLGLKYSKALDLKVLDQNGKAVPVWMGCYGIGVSRVLACIAETHHDEAGLAWPSVIAPAAVHVVATGKDAVAFEGAEKLVAELEAKGLEVIYDDRKKVSPGVKFKDAELIGVPLVAVVGRDYVNDGTIELRDRNGENKVAVPAAEAADALAERFAALS.

Belongs to the class-II aminoacyl-tRNA synthetase family. ProS type 1 subfamily. Homodimer.

It is found in the cytoplasm. It catalyses the reaction tRNA(Pro) + L-proline + ATP = L-prolyl-tRNA(Pro) + AMP + diphosphate. In terms of biological role, catalyzes the attachment of proline to tRNA(Pro) in a two-step reaction: proline is first activated by ATP to form Pro-AMP and then transferred to the acceptor end of tRNA(Pro). As ProRS can inadvertently accommodate and process non-cognate amino acids such as alanine and cysteine, to avoid such errors it has two additional distinct editing activities against alanine. One activity is designated as 'pretransfer' editing and involves the tRNA(Pro)-independent hydrolysis of activated Ala-AMP. The other activity is designated 'posttransfer' editing and involves deacylation of mischarged Ala-tRNA(Pro). The misacylated Cys-tRNA(Pro) is not edited by ProRS. The chain is Proline--tRNA ligase from Bifidobacterium longum (strain NCC 2705).